A 1517-amino-acid chain; its full sequence is DNA-directed RNA polymerase subunit beta' (1517 aa).

Cys-71, Cys-73, Cys-86, and Cys-89 together coordinate Zn(2+). Asp-482, Asp-484, and Asp-486 together coordinate Mg(2+). Zn(2+) contacts are provided by Cys-812, Cys-886, Cys-893, and Cys-896.

Belongs to the RNA polymerase beta' chain family. In terms of assembly, the RNAP catalytic core consists of 2 alpha, 1 beta, 1 beta' and 1 omega subunit. When a sigma factor is associated with the core the holoenzyme is formed, which can initiate transcription. It depends on Mg(2+) as a cofactor. Zn(2+) is required as a cofactor.

The catalysed reaction is RNA(n) + a ribonucleoside 5'-triphosphate = RNA(n+1) + diphosphate. Functionally, DNA-dependent RNA polymerase catalyzes the transcription of DNA into RNA using the four ribonucleoside triphosphates as substrates. This chain is DNA-directed RNA polymerase subunit beta', found in Campylobacter jejuni subsp. jejuni serotype O:2 (strain ATCC 700819 / NCTC 11168).